The primary structure comprises 1330 residues: Protein PUTATIVE RECOMBINATION INITIATION DEFECT 1 (1330 aa).

The interval 1310–1330 (REGRVSPIQEETRQMQTERIV) is disordered.

In terms of assembly, interacts with SPO11-1. According to PubMed:28855712, may interact with SPO11-2; this is in contradiction with PubMed:9461215 which claims that it seems to not interact with SPO11-2. Binds to DFO, PRD3 and MTOPVIB. Facilitates an interaction between PRD3 and DFO. Expressed in flower buds.

It localises to the nucleus. Involved in DNA cleavage that forms the double-strand breaks (DSB) that initiate meiotic recombination. This is Protein PUTATIVE RECOMBINATION INITIATION DEFECT 1 from Arabidopsis thaliana (Mouse-ear cress).